The chain runs to 208 residues: Fusaric acid resistance protein FusD (208 aa).

A helical transmembrane segment spans residues 7 to 29; the sequence is LLLSMLVSAIAFAVLFPPTAPWL.

The protein localises to the cell membrane. Functionally, involved in the resistance (detoxification) of the fungal toxin fusaric acid. This is Fusaric acid resistance protein FusD (fusD) from Burkholderia cepacia (Pseudomonas cepacia).